Reading from the N-terminus, the 269-residue chain is Tryptophan synthase alpha chain (269 aa).

Residues Glu-50 and Asp-61 each act as proton acceptor in the active site.

It belongs to the TrpA family. Tetramer of two alpha and two beta chains.

The catalysed reaction is (1S,2R)-1-C-(indol-3-yl)glycerol 3-phosphate + L-serine = D-glyceraldehyde 3-phosphate + L-tryptophan + H2O. Its pathway is amino-acid biosynthesis; L-tryptophan biosynthesis; L-tryptophan from chorismate: step 5/5. Its function is as follows. The alpha subunit is responsible for the aldol cleavage of indoleglycerol phosphate to indole and glyceraldehyde 3-phosphate. In Francisella tularensis subsp. holarctica (strain FTNF002-00 / FTA), this protein is Tryptophan synthase alpha chain.